The primary structure comprises 140 residues: uncharacterized protein (140 aa).

The protein belongs to the MG067/MG068/MG395 family.

This is an uncharacterized protein from Mycoplasma pneumoniae (strain ATCC 29342 / M129 / Subtype 1) (Mycoplasmoides pneumoniae).